Consider the following 143-residue polypeptide: Ribosome-binding factor A (143 aa).

A compositionally biased stretch (basic and acidic residues) spans Ser-116–Gln-128. The segment at Ser-116–Asp-143 is disordered.

Belongs to the RbfA family. In terms of assembly, monomer. Binds 30S ribosomal subunits, but not 50S ribosomal subunits or 70S ribosomes.

The protein localises to the cytoplasm. One of several proteins that assist in the late maturation steps of the functional core of the 30S ribosomal subunit. Associates with free 30S ribosomal subunits (but not with 30S subunits that are part of 70S ribosomes or polysomes). Required for efficient processing of 16S rRNA. May interact with the 5'-terminal helix region of 16S rRNA. This is Ribosome-binding factor A from Shewanella sediminis (strain HAW-EB3).